The sequence spans 352 residues: Protein RecA (352 aa).

68-75 provides a ligand contact to ATP; it reads GPESSGKT.

The protein belongs to the RecA family.

It is found in the cytoplasm. Can catalyze the hydrolysis of ATP in the presence of single-stranded DNA, the ATP-dependent uptake of single-stranded DNA by duplex DNA, and the ATP-dependent hybridization of homologous single-stranded DNAs. It interacts with LexA causing its activation and leading to its autocatalytic cleavage. This chain is Protein RecA, found in Clostridium perfringens (strain ATCC 13124 / DSM 756 / JCM 1290 / NCIMB 6125 / NCTC 8237 / Type A).